The chain runs to 420 residues: CinA-like protein (420 aa).

This sequence belongs to the CinA family.

The polypeptide is CinA-like protein (Geotalea uraniireducens (strain Rf4) (Geobacter uraniireducens)).